We begin with the raw amino-acid sequence, 331 residues long: Ribosomal RNA small subunit methyltransferase H (331 aa).

S-adenosyl-L-methionine-binding positions include 38 to 40 (GGY), Asp-56, Phe-83, Asp-100, and Gln-107. A disordered region spans residues 308 to 331 (TDAPAGPVDPQVLGMPLIPKKGRR).

The protein belongs to the methyltransferase superfamily. RsmH family.

Its subcellular location is the cytoplasm. It catalyses the reaction cytidine(1402) in 16S rRNA + S-adenosyl-L-methionine = N(4)-methylcytidine(1402) in 16S rRNA + S-adenosyl-L-homocysteine + H(+). In terms of biological role, specifically methylates the N4 position of cytidine in position 1402 (C1402) of 16S rRNA. The polypeptide is Ribosomal RNA small subunit methyltransferase H (Cereibacter sphaeroides (strain ATCC 17025 / ATH 2.4.3) (Rhodobacter sphaeroides)).